A 549-amino-acid chain; its full sequence is S-methyl thiourocanate hydratase (549 aa).

The NAD(+) site is built by Met49, Gly173, Met174, Gly175, Asp193, Ser198, Asn239, Ala240, Gln260, Val270, and Tyr318.

It belongs to the urocanase family. S-methyl thiourocanate hydratase subfamily. Requires NAD(+) as cofactor.

The catalysed reaction is S-methyl-(E)-thiourocanate + H2O = S-methyl-thiohydantoin-5-propanoate. Functionally, hydratase involved in the catabolism of S-methyl ergothioneine. Catalyzes the 1,4-addition of H(2)O to S-methyl thiourocanate, leading to the formation of S-methyl-thiohydantoin-5-propanoate, the second step in S-methyl ergothioneine degradation. Cannot use urocanate or thiourocanate as substrate. The protein is S-methyl thiourocanate hydratase of Variovorax sp. (strain JCM 16519 / RA8).